The chain runs to 163 residues: Lysosomal enzyme trafficking factor (163 aa).

The next 2 helical transmembrane spans lie at 40-60 and 98-118; these read MGWI…YYVF and LPFW…FLFL.

This sequence belongs to the LYSET family. Interacts with GNPTAB; this interaction is important for proper localization of GNPTAB in Golgi stacks. Interacts with MBTPS1.

It is found in the golgi apparatus membrane. Required for mannose-6-phosphate-dependent trafficking of lysosomal enzymes. LYSET bridges GlcNAc-1-phosphate transferase (GNPTAB), to the membrane-bound transcription factor site-1 protease (MBTPS1), thus allowing proteolytic activation of the GNPTAB. GNPTAB is involved in the regulation of M6P-dependent Golgi-to-lysosome trafficking of lysosomal enzymes. LYSET is thus an essential factor for maturation and delivery of lysosomal hydrolases. In terms of biological role, (Microbial infection) Essential for infection by muliple viruses, including SARS-CoV-2, that utilize activated cathepsins for entry after M6P-dependent lysosomal transport. This is Lysosomal enzyme trafficking factor from Homo sapiens (Human).